Here is a 518-residue protein sequence, read N- to C-terminus: D-aminopeptidase (518 aa).

Residue Ser-62 is the Nucleophile of the active site. The active-site Proton donor/acceptor is the Lys-65. The interval 373-392 (FGTGPEKMDISGENEAQSSM) is disordered. The interval 477–487 (QRSMDAPSPGE) is important for specificity. Asp-481 is a binding site for substrate.

This sequence belongs to the peptidase S12 family. In terms of assembly, homodimer.

It catalyses the reaction Release of an N-terminal D-amino acid from a peptide, Xaa-|-Yaa-, in which Xaa is preferably D-Ala, D-Ser or D-Thr. D-amino acid amides and methyl esters also are hydrolyzed, as is glycine amide.. Inhibited by beta-lactam compounds such as 6-aminopenicillic acid, 7-aminocephalosporanic acid, benzylpenicillin and ampicillin. Inhibited by p-chloromercuribenzoate. Its function is as follows. Hydrolyzes N-terminal residues in D-amino acid-containing peptides. This Brucella melitensis biotype 1 (strain ATCC 23456 / CCUG 17765 / NCTC 10094 / 16M) protein is D-aminopeptidase.